The following is a 404-amino-acid chain: Cytochrome b561 and DOMON domain-containing protein At2g04850 (404 aa).

An N-terminal signal peptide occupies residues 1–22 (MATLILSFLLLLLATKLPESLA). The DOMON domain occupies 43-173 (QQASIAWTYH…TKIHHVWNRG (131 aa)). Residues 180–380 (SPTIHPTTST…MEVNSWVVFC (201 aa)) enclose the Cytochrome b561 domain. Residues 217–237 (VTHGVVNAISWGFLLPAGAVT) form a helical membrane-spanning segment. 2 residues coordinate heme b: His-219 and His-255. Residues 256 to 276 (AAIQLTGFLLGTIGFSIGIVL) traverse the membrane as a helical segment. His-288 serves as a coordination point for heme b. The helical transmembrane segment at 290-310 (SLGIATFTAAALQTLALLFRP) threads the bilayer. His-324 contributes to the heme b binding site. Helical transmembrane passes span 326 to 346 (FVGY…FEVL) and 359 to 379 (LCLS…WVVF).

It depends on heme b as a cofactor.

The protein localises to the membrane. May act as a catecholamine-responsive trans-membrane electron transporter. The polypeptide is Cytochrome b561 and DOMON domain-containing protein At2g04850 (Arabidopsis thaliana (Mouse-ear cress)).